The sequence spans 473 residues: TKASVGFKAGVKDYKLTYYTPDYETKDTDILAAFRVTPQPGVPPEEAGAAVAAESSTGTWTTVWTDGLTSLDRYKGRCYHIEPVVGEENQYIAYVAYPLDLFEEGSVTNMFTSIVGNVFGFKALRALRLEDLRIPPAYSKTFEGPPHGIQSERDKLNKYGRPLLGCTIKPKLGLSAKNYGRACYECLRGGLDFTKDDENVNSQPFMRWRDRFLFCAEALYKAQAETGEIKGHYLNATAGTCEEMIKRAVFARELGVPIVMHDYLTGGFTANTSLAHYCRDNGLLLHIHRAMHAVIDRQKYHGMHFRVLAKALRMSGGDHIHAGTVVGKLEGEREMTLGFVDLLRDDYIEKDRSRGIFFTQDWVSMPGVIPVASGGIHVWHMPALTEIFGDDSVLQFGGGTLGHPWGNAPGAVANRVALEACVQARNEGRDLAREGNEIIREASKWSPELAAACEIWKAIKFEFEPVDKLDIKK.

K8 carries the post-translational modification N6,N6,N6-trimethyllysine. Residues N117 and T167 each coordinate substrate. K169 (proton acceptor) is an active-site residue. Residue K171 participates in substrate binding. The Mg(2+) site is built by K195, D197, and E198. K195 carries the post-translational modification N6-carboxylysine. H288 functions as the Proton acceptor in the catalytic mechanism. Substrate-binding residues include R289, H321, and S373.

This sequence belongs to the RuBisCO large chain family. Type I subfamily. Heterohexadecamer of 8 large chains and 8 small chains; disulfide-linked. The disulfide link is formed within the large subunit homodimers. Mg(2+) serves as cofactor. The disulfide bond which can form in the large chain dimeric partners within the hexadecamer appears to be associated with oxidative stress and protein turnover.

It localises to the plastid. The protein resides in the chloroplast. It carries out the reaction 2 (2R)-3-phosphoglycerate + 2 H(+) = D-ribulose 1,5-bisphosphate + CO2 + H2O. It catalyses the reaction D-ribulose 1,5-bisphosphate + O2 = 2-phosphoglycolate + (2R)-3-phosphoglycerate + 2 H(+). Its function is as follows. RuBisCO catalyzes two reactions: the carboxylation of D-ribulose 1,5-bisphosphate, the primary event in carbon dioxide fixation, as well as the oxidative fragmentation of the pentose substrate in the photorespiration process. Both reactions occur simultaneously and in competition at the same active site. The polypeptide is Ribulose bisphosphate carboxylase large chain (Amorphophallus titanum (Titan arum)).